An 827-amino-acid polypeptide reads, in one-letter code: Leucine--tRNA ligase (827 aa).

Residues 46-56 carry the 'HIGH' region motif; the sequence is PYPSGRIHMGH. The short motif at 585 to 589 is the 'KMSKS' region element; it reads KMSKS. Lysine 588 provides a ligand contact to ATP.

The protein belongs to the class-I aminoacyl-tRNA synthetase family.

The protein localises to the cytoplasm. It catalyses the reaction tRNA(Leu) + L-leucine + ATP = L-leucyl-tRNA(Leu) + AMP + diphosphate. The chain is Leucine--tRNA ligase from Desulfotalea psychrophila (strain LSv54 / DSM 12343).